The primary structure comprises 206 residues: Small ribosomal subunit protein uS4 (206 aa).

Residues 96-156 (GRLDNVVYRM…EKAKKQSRVK (61 aa)) enclose the S4 RNA-binding domain.

This sequence belongs to the universal ribosomal protein uS4 family. In terms of assembly, part of the 30S ribosomal subunit. Contacts protein S5. The interaction surface between S4 and S5 is involved in control of translational fidelity.

One of the primary rRNA binding proteins, it binds directly to 16S rRNA where it nucleates assembly of the body of the 30S subunit. In terms of biological role, with S5 and S12 plays an important role in translational accuracy. The sequence is that of Small ribosomal subunit protein uS4 from Yersinia enterocolitica serotype O:8 / biotype 1B (strain NCTC 13174 / 8081).